Here is a 436-residue protein sequence, read N- to C-terminus: MPGVTKEEPQLDLAIIGGGITGLSLAAGLLSRNIHVTIYERARQFREIGAGIGFTPNAERSMIALDPRVHAAFKNVATPNETDLFRWVDGYTHYSDERYEELLFETDLGKRGFEGCHRAQFLDELVKLIPEKNVRLGKTLRRVTEKVDGEKLLLEFEDGSTAEADAVIGCDGIRSRVRQLILGEDNPASYPRYSHKSAFRGLVPMDRAVDAMGREKALTRHMHLGQDAHVLTFPVAMGKLLNVVAFVTDPGEWPHEEKLSAPASKEEAVQAFSGFGHVVRAVMDLLPDTLDRWAVFDTYDHPASTYVRGRMCIAGDAAHASSPHHGAGAGTGIEDAAVLAAVLAAASETASSLAKTKAEALRAALATYDAIRLERSQWVVQSSRILGELYEWQYEPTGRDAAKCGAEVYWRSHQIWDYDVDDMLRRTAEDYRRRLE.

FAD contacts are provided by Glu40, Gly53, and Arg118. Arg200 is a catalytic residue. Asp316 and Ala329 together coordinate FAD.

The protein belongs to the paxM FAD-dependent monooxygenase family. It depends on FAD as a cofactor.

It functions in the pathway secondary metabolite biosynthesis. Functionally, FAD-dependent monooxygenase; part of the gene cluster that mediates the biosynthesis of azaphilone pigments (MonAzPs), a complex mixture of compounds with a common azaphilone skeleton very widely used as food colorants. Within the pathway, pigN hydroxylates the benzaldehyde M7PKS-1 intermediate at C-4 to form the pyran ring. The first step of the pathway is performed by the nrPKS pigA that forms the hexaketide precursor from successive condensations of five malonyl-CoA units, with a simple acetyl-CoA starter unit. The role of esterase pigG is not clear, but it may play at most a supplementary role in the formation of the benzaldehyde produced by the pigA nrPKS. This very reactive benzaldehyde is intercepted by the pigC ketoreductase that to provide the first stable enzyme-free MonAzPs intermediate, 6-(4-hydroxy-2-oxopentyl)-3-methyl-2,4-dioxocyclohexane carbaldehyde, also known as M7PKS-1. The FAD-dependent monooxygenase pigN hydroxylates M7PKS-1 at C-4, which triggers the formation of the pyran ring. PigJ, pigK and pigD are involved in the acetylation of the pyran ring. PigJ and pigK form the two subunits of a dedicated fungal FAS that produces the side chain fatty acyl moiety of MonAzPs and pigD transfers the fatty acyl chain to the C-4 alcohol. PigM and pigO are involved in the elimination of the omega-1 alcohol. PigM acts as an O-acetyltransferase that synthesizes the putative O-11 acetyl intermediate whereas pigO eliminates acetic acid to yield an intermediate with a C10(11) double bond. The dehydration of the C-11 alcohol followed by the reduction of the C6(7) double bond by the NAD(P)H-dependent oxidoreductase pigE increases the electrophilicity of the C-5 ketone of the resulting acyl benzopyran. This in turn sets up the C-5 ketone for an intramolecular Knoevenagel aldol condensation with the C-20 enol of the side chain. This condensation affords the characteristic linear tricyclic carbon skeletons of the yellow pigments that serve as the common precursors for the classical yellow pigments monascin and ankaflavin, orange pigments rubopunctatin and monascorubrin, and red pigments ribropunctamine and monascorubramine. The FAD-dependent oxidoreductase pigF is especially invoved in the biosynthesis of orange and red pigments via desaturation of C6(7). This Monascus ruber (Mold) protein is FAD-dependent monooxygenase pigN.